A 211-amino-acid chain; its full sequence is Adenylyl-sulfate kinase (211 aa).

ATP is bound at residue 36-43 (GLSGSGKS). Ser-110 acts as the Phosphoserine intermediate in catalysis.

The protein belongs to the APS kinase family.

It catalyses the reaction adenosine 5'-phosphosulfate + ATP = 3'-phosphoadenylyl sulfate + ADP + H(+). It participates in sulfur metabolism; hydrogen sulfide biosynthesis; sulfite from sulfate: step 2/3. Catalyzes the synthesis of activated sulfate. The sequence is that of Adenylyl-sulfate kinase (cysC) from Buchnera aphidicola subsp. Schizaphis graminum (strain Sg).